A 164-amino-acid polypeptide reads, in one-letter code: ATP synthase subunit b 2 (164 aa).

Residues 4-24 (TFWAFVGLVLFLALLVYFEVP) form a helical membrane-spanning segment.

This sequence belongs to the ATPase B chain family. In terms of assembly, F-type ATPases have 2 components, F(1) - the catalytic core - and F(0) - the membrane proton channel. F(1) has five subunits: alpha(3), beta(3), gamma(1), delta(1), epsilon(1). F(0) has three main subunits: a(1), b(2) and c(10-14). The alpha and beta chains form an alternating ring which encloses part of the gamma chain. F(1) is attached to F(0) by a central stalk formed by the gamma and epsilon chains, while a peripheral stalk is formed by the delta and b chains.

The protein resides in the cell inner membrane. Functionally, f(1)F(0) ATP synthase produces ATP from ADP in the presence of a proton or sodium gradient. F-type ATPases consist of two structural domains, F(1) containing the extramembraneous catalytic core and F(0) containing the membrane proton channel, linked together by a central stalk and a peripheral stalk. During catalysis, ATP synthesis in the catalytic domain of F(1) is coupled via a rotary mechanism of the central stalk subunits to proton translocation. Its function is as follows. Component of the F(0) channel, it forms part of the peripheral stalk, linking F(1) to F(0). The protein is ATP synthase subunit b 2 of Bartonella henselae (strain ATCC 49882 / DSM 28221 / CCUG 30454 / Houston 1) (Rochalimaea henselae).